The chain runs to 398 residues: Acetate kinase 1 (398 aa).

Asn10 serves as a coordination point for Mg(2+). Lys17 lines the ATP pocket. Position 89 (Arg89) interacts with substrate. The Proton donor/acceptor role is filled by Asp146. ATP-binding positions include 206–210, 281–283, and 329–333; these read HLGNG, DCR, and GIGEN. Glu384 serves as a coordination point for Mg(2+).

This sequence belongs to the acetokinase family. In terms of assembly, homodimer. Requires Mg(2+) as cofactor. Mn(2+) is required as a cofactor.

Its subcellular location is the cytoplasm. The catalysed reaction is acetate + ATP = acetyl phosphate + ADP. It participates in metabolic intermediate biosynthesis; acetyl-CoA biosynthesis; acetyl-CoA from acetate: step 1/2. Functionally, catalyzes the formation of acetyl phosphate from acetate and ATP. Can also catalyze the reverse reaction. This chain is Acetate kinase 1, found in Neisseria meningitidis serogroup B (strain ATCC BAA-335 / MC58).